The primary structure comprises 210 residues: Putative protein-lysine deacylase ABHD14B (210 aa).

A2 is subject to N-acetylalanine. Phosphoserine is present on S91. Residues S111, D162, and H188 each act as charge relay system in the active site.

It belongs to the AB hydrolase superfamily. ABHD14 family. As to quaternary structure, may interact with TAF1.

The protein resides in the cytoplasm. The protein localises to the nucleus. The catalysed reaction is L-lysyl-[protein] + acetyl-CoA = N(6)-acetyl-L-lysyl-[protein] + CoA + H(+). Its function is as follows. Acts as an atypical protein-lysine deacetylase in vitro. Catalyzes the deacetylation of lysine residues using CoA as substrate, generating acetyl-CoA and the free amine of protein-lysine residues. Additional experiments are however required to confirm the protein-lysine deacetylase activity in vivo. Has hydrolase activity towards various surrogate p-nitrophenyl (pNp) substrates, such as pNp-butyrate, pNp-acetate and pNp-octanoate in vitro, with a strong preference for pNp-acetate. May activate transcription. This Pongo abelii (Sumatran orangutan) protein is Putative protein-lysine deacylase ABHD14B.